The following is a 182-amino-acid chain: Large ribosomal subunit protein uL6 (182 aa).

Belongs to the universal ribosomal protein uL6 family. In terms of assembly, part of the 50S ribosomal subunit.

In terms of biological role, this protein binds to the 23S rRNA, and is important in its secondary structure. It is located near the subunit interface in the base of the L7/L12 stalk, and near the tRNA binding site of the peptidyltransferase center. The protein is Large ribosomal subunit protein uL6 of Methanococcus maripaludis (strain C7 / ATCC BAA-1331).